The sequence spans 424 residues: D-inositol 3-phosphate glycosyltransferase (424 aa).

1D-myo-inositol 3-phosphate is bound by residues histidine 9, 20-25, lysine 78, tyrosine 110, threonine 134, and arginine 154; that span reads DAGGMN. UDP-N-acetyl-alpha-D-glucosamine is bound at residue glycine 23. The UDP-N-acetyl-alpha-D-glucosamine site is built by arginine 231, lysine 236, and arginine 295. Residues tyrosine 304, glutamine 305, and alanine 307 each contribute to the Mg(2+) site. UDP-N-acetyl-alpha-D-glucosamine contacts are provided by glutamate 317 and glutamate 325. Threonine 331 contributes to the Mg(2+) binding site.

Belongs to the glycosyltransferase group 1 family. MshA subfamily. Homodimer.

It catalyses the reaction 1D-myo-inositol 3-phosphate + UDP-N-acetyl-alpha-D-glucosamine = 1D-myo-inositol 2-acetamido-2-deoxy-alpha-D-glucopyranoside 3-phosphate + UDP + H(+). Its function is as follows. Catalyzes the transfer of a N-acetyl-glucosamine moiety to 1D-myo-inositol 3-phosphate to produce 1D-myo-inositol 2-acetamido-2-deoxy-glucopyranoside 3-phosphate in the mycothiol biosynthesis pathway. The polypeptide is D-inositol 3-phosphate glycosyltransferase (Corynebacterium urealyticum (strain ATCC 43042 / DSM 7109)).